The sequence spans 317 residues: L-lactate dehydrogenase 1 (317 aa).

Residues valine 17, aspartate 38, lysine 43, tyrosine 69, and 83-84 (GA) contribute to the NAD(+) site. Substrate-binding residues include glutamine 86 and arginine 92. Residues serine 105, 122 to 124 (ATN), and serine 147 each bind NAD(+). 124 to 127 (NPVD) contacts substrate. 152 to 155 (DSAR) contributes to the substrate binding site. The Proton acceptor role is filled by histidine 179. Tyrosine 223 is subject to Phosphotyrosine. Threonine 232 serves as a coordination point for substrate.

This sequence belongs to the LDH/MDH superfamily. LDH family. In terms of assembly, homotetramer.

It is found in the cytoplasm. The catalysed reaction is (S)-lactate + NAD(+) = pyruvate + NADH + H(+). It participates in fermentation; pyruvate fermentation to lactate; (S)-lactate from pyruvate: step 1/1. Catalyzes the conversion of lactate to pyruvate (Potential). Appears to be the primary factor that allows S.aureus growth during nitrosative stress in both aerobically and anaerobically cultured cells. The chain is L-lactate dehydrogenase 1 from Staphylococcus aureus (strain USA300).